The following is a 254-amino-acid chain: MIKKRIIPCLDVKDGRVVKGVQFKGLRDIGDPVALAAYYNAELADELVFLDISRTENGHQMMLDIIEETASKLFIPLTIGGGISSTDDISTLLKHGADKVSLNSSALRNPSLVKEASEKFGSQCICIAVDAKWEDERNDWFCYTHGGKQPTDIRVLDWVRQVEYLGAGELLVTSMDYDGVKQGFDHQLLNQINTVVSIPVIASGGGGNAQHFVDLFQQTNVSAGLAASIFHDKETTIGAVKTYLKDKGVDVRWH.

Residues Asp-11 and Asp-130 contribute to the active site.

Belongs to the HisA/HisF family. In terms of assembly, heterodimer of HisH and HisF.

The protein localises to the cytoplasm. It catalyses the reaction 5-[(5-phospho-1-deoxy-D-ribulos-1-ylimino)methylamino]-1-(5-phospho-beta-D-ribosyl)imidazole-4-carboxamide + L-glutamine = D-erythro-1-(imidazol-4-yl)glycerol 3-phosphate + 5-amino-1-(5-phospho-beta-D-ribosyl)imidazole-4-carboxamide + L-glutamate + H(+). It functions in the pathway amino-acid biosynthesis; L-histidine biosynthesis; L-histidine from 5-phospho-alpha-D-ribose 1-diphosphate: step 5/9. Its function is as follows. IGPS catalyzes the conversion of PRFAR and glutamine to IGP, AICAR and glutamate. The HisF subunit catalyzes the cyclization activity that produces IGP and AICAR from PRFAR using the ammonia provided by the HisH subunit. This is Imidazole glycerol phosphate synthase subunit HisF from Staphylococcus carnosus (strain TM300).